Reading from the N-terminus, the 234-residue chain is Sugar fermentation stimulation protein homolog (234 aa).

The protein belongs to the SfsA family.

The polypeptide is Sugar fermentation stimulation protein homolog (Pectobacterium atrosepticum (strain SCRI 1043 / ATCC BAA-672) (Erwinia carotovora subsp. atroseptica)).